We begin with the raw amino-acid sequence, 265 residues long: Mlc titration factor A (265 aa).

His111, His148, His152, and Glu211 together coordinate Zn(2+).

This sequence belongs to the MtfA family. As to quaternary structure, interacts with Mlc. Zn(2+) serves as cofactor.

Its subcellular location is the cytoplasm. Involved in the modulation of the activity of the glucose-phosphotransferase system (glucose-PTS). Interacts with the transcriptional repressor Mlc, preventing its interaction with DNA and leading to the modulation of expression of genes regulated by Mlc, including ptsG, which encodes the PTS system glucose-specific EIICB component. Its function is as follows. Shows zinc-dependent metallopeptidase activity. The sequence is that of Mlc titration factor A from Enterobacter sp. (strain 638).